The sequence spans 584 residues: ATP-dependent lipid A-core flippase (584 aa).

Transmembrane regions (helical) follow at residues 15–35, 63–83, 153–173, 251–271, and 277–297; these read LLGY…SMAV, IMWV…AGFI, LGML…CLVV, TGVT…FAGL, and GLTA…FAPV. Residues 27 to 309 enclose the ABC transmembrane type-1 domain; it reads LLSMLSMAVA…ISSVSQAMQR (283 aa). An ABC transporter domain is found at 341–576; the sequence is LSFDAVSFAY…GGLYARLHSL (236 aa). ATP is bound at residue 375-382; it reads GSSGSGKT.

It belongs to the ABC transporter superfamily. Lipid exporter (TC 3.A.1.106) family. Homodimer.

It is found in the cell inner membrane. It carries out the reaction ATP + H2O + lipid A-core oligosaccharideSide 1 = ADP + phosphate + lipid A-core oligosaccharideSide 2.. Its function is as follows. Involved in lipopolysaccharide (LPS) biosynthesis. Translocates lipid A-core from the inner to the outer leaflet of the inner membrane. Transmembrane domains (TMD) form a pore in the inner membrane and the ATP-binding domain (NBD) is responsible for energy generation. This is ATP-dependent lipid A-core flippase from Chromobacterium violaceum (strain ATCC 12472 / DSM 30191 / JCM 1249 / CCUG 213 / NBRC 12614 / NCIMB 9131 / NCTC 9757 / MK).